The following is a 247-amino-acid chain: Triosephosphate isomerase (247 aa).

Residue 9-11 (NWK) participates in substrate binding. His94 functions as the Electrophile in the catalytic mechanism. Glu165 acts as the Proton acceptor in catalysis. Substrate-binding positions include Gly171, Ser209, and 230–231 (GG).

The protein belongs to the triosephosphate isomerase family. As to quaternary structure, homodimer.

It localises to the cytoplasm. It catalyses the reaction D-glyceraldehyde 3-phosphate = dihydroxyacetone phosphate. Its pathway is carbohydrate biosynthesis; gluconeogenesis. It participates in carbohydrate degradation; glycolysis; D-glyceraldehyde 3-phosphate from glycerone phosphate: step 1/1. Functionally, involved in the gluconeogenesis. Catalyzes stereospecifically the conversion of dihydroxyacetone phosphate (DHAP) to D-glyceraldehyde-3-phosphate (G3P). The sequence is that of Triosephosphate isomerase from Albidiferax ferrireducens (strain ATCC BAA-621 / DSM 15236 / T118) (Rhodoferax ferrireducens).